The chain runs to 225 residues: Biosynthetic peptidoglycan transglycosylase (225 aa).

A helical membrane pass occupies residues 12-32; the sequence is IWFVAWRFLLLFVIVLFLFRF.

This sequence belongs to the glycosyltransferase 51 family.

It localises to the cell inner membrane. It catalyses the reaction [GlcNAc-(1-&gt;4)-Mur2Ac(oyl-L-Ala-gamma-D-Glu-L-Lys-D-Ala-D-Ala)](n)-di-trans,octa-cis-undecaprenyl diphosphate + beta-D-GlcNAc-(1-&gt;4)-Mur2Ac(oyl-L-Ala-gamma-D-Glu-L-Lys-D-Ala-D-Ala)-di-trans,octa-cis-undecaprenyl diphosphate = [GlcNAc-(1-&gt;4)-Mur2Ac(oyl-L-Ala-gamma-D-Glu-L-Lys-D-Ala-D-Ala)](n+1)-di-trans,octa-cis-undecaprenyl diphosphate + di-trans,octa-cis-undecaprenyl diphosphate + H(+). It functions in the pathway cell wall biogenesis; peptidoglycan biosynthesis. Functionally, peptidoglycan polymerase that catalyzes glycan chain elongation from lipid-linked precursors. The polypeptide is Biosynthetic peptidoglycan transglycosylase (Marinomonas sp. (strain MWYL1)).